The primary structure comprises 88 residues: Apolipoprotein C-I (88 aa).

Positions 1–26 (MRLILSLPVLAVVLAMVLEGPAPAQA) are cleaved as a signal peptide.

The protein belongs to the apolipoprotein C1 family.

It is found in the secreted. Its function is as follows. Inhibitor of lipoprotein binding to the low density lipoprotein (LDL) receptor, LDL receptor-related protein, and very low density lipoprotein (VLDL) receptor. Associates with high density lipoproteins (HDL) and the triacylglycerol-rich lipoproteins in the plasma and makes up about 10% of the protein of the VLDL and 2% of that of HDL. Appears to interfere directly with fatty acid uptake and is also the major plasma inhibitor of cholesteryl ester transfer protein (CETP). Binds free fatty acids and reduces their intracellular esterification. Modulates the interaction of APOE with beta-migrating VLDL and inhibits binding of beta-VLDL to the LDL receptor-related protein. This Cynopterus brachyotis (Lesser short-nosed fruit bat) protein is Apolipoprotein C-I (APOC1).